A 422-amino-acid chain; its full sequence is Phagosome assembly factor 1 (422 aa).

Belongs to the PHAF1 family. In terms of assembly, interacts with BCAS3; the interaction is requrired for the association with the phagophore.

Its subcellular location is the cytoplasm. It is found in the preautophagosomal structure. Its function is as follows. Plays a regulatory role in autophagic activity. In complex with BCAS3, associates with the autophagosome formation site during both non-selective and selective autophagy. The protein is Phagosome assembly factor 1 of Mus musculus (Mouse).